Consider the following 609-residue polypeptide: Snake venom metalloproteinase-disintegrin-like mocarhagin (609 aa).

Residues 1–20 (MIQALLVAICLAVFPYQGSS) form the signal peptide. The propeptide occupies 21-191 (IILESGNVND…DEPIEKSSQL (171 aa)). Positions 205 to 400 (KYIEFYVVVD…DRPQCILNKP (196 aa)) constitute a Peptidase M12B domain. Glu-208 and Asp-292 together coordinate Ca(2+). N-linked (GlcNAc...) asparagine glycosylation is present at Asn-303. 3 disulfides stabilise this stretch: Cys-316/Cys-395, Cys-356/Cys-379, and Cys-358/Cys-363. Zn(2+)-binding residues include His-341 and His-345. The Ca(2+) site is built by Cys-395, Asn-398, Val-410, Asn-413, Phe-415, Glu-417, Glu-420, and Asp-423. The Disintegrin domain occupies 408–494 (PPVCGNYFVE…KCPKDSFQRN (87 aa)). 14 disulfides stabilise this stretch: Cys-411–Cys-440, Cys-422–Cys-435, Cys-424–Cys-430, Cys-434–Cys-457, Cys-448–Cys-454, Cys-453–Cys-479, Cys-466–Cys-486, Cys-473–Cys-505, Cys-498–Cys-510, Cys-517–Cys-567, Cys-532–Cys-575, Cys-545–Cys-555, Cys-562–Cys-601, and Cys-595–Cys-606. Positions 472–474 (DCD) match the D/ECD-tripeptide motif. N-linked (GlcNAc...) asparagine glycosylation occurs at Asn-507.

It belongs to the venom metalloproteinase (M12B) family. P-III subfamily. P-IIIa sub-subfamily. In terms of assembly, monomer. It depends on Zn(2+) as a cofactor. As to expression, expressed by the venom gland.

Its subcellular location is the secreted. With respect to regulation, inhibited by EDTA and diisopropyl fluorophosphate (DFP). Also inhibited by an excess of zinc or calcium ions. In terms of biological role, snake venom zinc metalloproteinase that inhibits platelet aggregation by cleaving platelet glycoprotein Ib alpha (GP1BA) at Glu-298/Asp-299, and abolishes binding of von Willebrand factor (VWF) to GPIBA. Cleaves P-selectin glycoprotein ligand-1 (PSGL-1/SELPLG) at Tyr-51/Asp-52, and completely abolishes the binding of PSGL-1 to P-selectin. Anionic amino acid sequences containing sulfated tyrosines are needed for cleavages. Inhibits the thrombin-induced platelet aggregation, and the thrombin-induced release of ATP and ADP. Has lectin activity (inhibited by heparin). The protein is Snake venom metalloproteinase-disintegrin-like mocarhagin of Naja mossambica (Mozambique spitting cobra).